We begin with the raw amino-acid sequence, 1153 residues long: Error-prone DNA polymerase (1153 aa).

The interval 1107–1153 (DELIAPSASTEREAPLNDDRRDHPDLPAQQIRHPRNVRILPPSRDFH) is disordered. Positions 1116 to 1131 (TEREAPLNDDRRDHPD) are enriched in basic and acidic residues.

Belongs to the DNA polymerase type-C family. DnaE2 subfamily.

It localises to the cytoplasm. The catalysed reaction is DNA(n) + a 2'-deoxyribonucleoside 5'-triphosphate = DNA(n+1) + diphosphate. Its function is as follows. DNA polymerase involved in damage-induced mutagenesis and translesion synthesis (TLS). It is not the major replicative DNA polymerase. The protein is Error-prone DNA polymerase of Rhodopseudomonas palustris (strain BisA53).